Reading from the N-terminus, the 271-residue chain is Methyltransferase psoC (271 aa).

Belongs to the methyltransferase superfamily. LaeA methyltransferase family.

It participates in secondary metabolite biosynthesis. Methyltransferase; part of the gene cluster that mediates the biosynthesis of pseurotin A, a competitive inhibitor of chitin synthase and an inducer of nerve-cell proliferation. The PKS-NRPS hybrid synthetase psoA is responsible for the biosynthesis of azaspirene, one of the first intermediates having the 1-oxa-7-azaspiro[4,4]-non-2-ene-4,6-dione core of pseurotin, via condensation of one acetyl-CoA, 4 malonyl-CoA, and a L-phenylalanine molecule. The dual-functional monooxygenase/methyltransferase psoF seems to be involved in the addition of the C3 methyl group onto the pseurotin scaffold. Azaspirene is then converted to synerazol through 4 steps including oxidation of C17 by the cytochrome P450 monooxygenase psoD, O-methylation of the hydroxy group of C8 by the methyltransferase psoC, and the trans-to-cis isomerization of the C13 olefin by the glutathione S-transferase psoE. The fourth step of synerazol production is performed by the dual-functional monooxygenase/methyltransferase psoF which seems to catalyze the epoxidation of the intermediate deepoxy-synerazol. Synerazol can be attacked by a water molecule nonenzymatically at two different positions to yield two diol products, pseurotin A and pseurotin D. This chain is Methyltransferase psoC, found in Aspergillus fumigatus (strain ATCC MYA-4609 / CBS 101355 / FGSC A1100 / Af293) (Neosartorya fumigata).